Consider the following 460-residue polypeptide: Antizyme inhibitor 2 (460 aa).

The tract at residues 117 to 140 (QIAQIKYAAKHGIQLLSFDNEMEL) is necessary for polyamine uptake stimulation.

The protein belongs to the Orn/Lys/Arg decarboxylase class-II family. ODC antizyme inhibitor subfamily. In terms of assembly, monomer. Interacts with OAZ1, OAZ2 and OAZ3; this interaction disrupts the interaction between the antizyme and ODC1. Does not form a heterodimer with ODC1. Ubiquitinated, leading to its proteasomal degradation; a process that is reduced in presence of antizymes. May also be degraded through the lysosomal degradative pathway in a proteasomal-independent manner. In terms of tissue distribution, expressed in the neocortex, thalamus, hippocampus, cerebellum, medulla oblongata, gray and white matter. Expressed in neurons, oligodendrocytes, basket, Purkinje and pyramidal cells. Expressed in spermatocytes and Leydig cells of the testis. Expressed in luteal theca cells lining corpus luteum cysts and in hilus cells of the ovary. Expressed in primary and neoplastic mast cells (MC) (at protein level). Highly expressed in brain. Also expressed in testis.

It is found in the nucleus. It localises to the cytoplasm. The protein localises to the perinuclear region. Its subcellular location is the membrane. The protein resides in the cytoplasmic vesicle. It is found in the endoplasmic reticulum-Golgi intermediate compartment. It localises to the golgi apparatus. The protein localises to the cis-Golgi network. Its subcellular location is the trans-Golgi network. The protein resides in the cytoplasmic granule. It is found in the cell projection. It localises to the axon. The protein localises to the dendrite. Its subcellular location is the perikaryon. Antizyme inhibitor (AZI) protein that positively regulates ornithine decarboxylase (ODC) activity and polyamine uptake. AZI is an enzymatically inactive ODC homolog that counteracts the negative effect of ODC antizymes (AZs) OAZ1, OAZ2 and OAZ3 on ODC activity by competing with ODC for antizyme-binding. Inhibits antizyme-dependent ODC degradation and releases ODC monomers from their inactive complex with antizymes, leading to formation of the catalytically active ODC homodimer and restoring polyamine production. Participates in the morphological integrity of the trans-Golgi network (TGN) and functions as a regulator of intracellular secretory vesicle trafficking. This Homo sapiens (Human) protein is Antizyme inhibitor 2 (AZIN2).